The chain runs to 89 residues: U-scoloptoxin(12)-Er1a (89 aa).

The N-terminal stretch at 1–22 (MKGLFLVVFLMWFVSQMNTEET) is a signal peptide.

The protein belongs to the scoloptoxin-12 family. Post-translationally, contains 3 disulfide bonds. In terms of tissue distribution, expressed by the venom gland.

Its subcellular location is the secreted. The protein is U-scoloptoxin(12)-Er1a of Ethmostigmus rubripes (Giant centipede).